Here is a 233-residue protein sequence, read N- to C-terminus: Small ribosomal subunit protein uS3 (233 aa).

The KH type-2 domain occupies 39 to 107; that stretch reads IRTFLKRKLY…EVNINIKEER (69 aa). Positions 211–233 are disordered; that stretch reads GVQPEKTEESAPAKKPRRARRGK. Positions 213-222 are enriched in basic and acidic residues; it reads QPEKTEESAP. Over residues 224–233 the composition is skewed to basic residues; the sequence is KKPRRARRGK.

Belongs to the universal ribosomal protein uS3 family. As to quaternary structure, part of the 30S ribosomal subunit. Forms a tight complex with proteins S10 and S14.

Binds the lower part of the 30S subunit head. Binds mRNA in the 70S ribosome, positioning it for translation. In Campylobacter lari (strain RM2100 / D67 / ATCC BAA-1060), this protein is Small ribosomal subunit protein uS3.